The sequence spans 404 residues: Probable tRNA sulfurtransferase (404 aa).

In terms of domain architecture, THUMP spans 60–165 (TAVAESLKQV…EEAAYLSYET (106 aa)). ATP is bound by residues 183–184 (ML), 208–209 (HF), Arg265, Gly287, and Gln296.

It belongs to the ThiI family.

It localises to the cytoplasm. It carries out the reaction [ThiI sulfur-carrier protein]-S-sulfanyl-L-cysteine + a uridine in tRNA + 2 reduced [2Fe-2S]-[ferredoxin] + ATP + H(+) = [ThiI sulfur-carrier protein]-L-cysteine + a 4-thiouridine in tRNA + 2 oxidized [2Fe-2S]-[ferredoxin] + AMP + diphosphate. It catalyses the reaction [ThiS sulfur-carrier protein]-C-terminal Gly-Gly-AMP + S-sulfanyl-L-cysteinyl-[cysteine desulfurase] + AH2 = [ThiS sulfur-carrier protein]-C-terminal-Gly-aminoethanethioate + L-cysteinyl-[cysteine desulfurase] + A + AMP + 2 H(+). It functions in the pathway cofactor biosynthesis; thiamine diphosphate biosynthesis. Catalyzes the ATP-dependent transfer of a sulfur to tRNA to produce 4-thiouridine in position 8 of tRNAs, which functions as a near-UV photosensor. Also catalyzes the transfer of sulfur to the sulfur carrier protein ThiS, forming ThiS-thiocarboxylate. This is a step in the synthesis of thiazole, in the thiamine biosynthesis pathway. The sulfur is donated as persulfide by IscS. In Streptococcus pneumoniae (strain 70585), this protein is Probable tRNA sulfurtransferase.